We begin with the raw amino-acid sequence, 241 residues long: MPKHGKKYLEALKLVDVTRRYSPKEAVELVKKVAHADFDESIDLHIKLNIDPRHADQNVRGTVTLPHGTGRTPRVLVFAVGEAARIAEEAGADYVGSDDLIRQIEGGWLEFDAAIAMADQMGKVGPLGRILGRRGLMPNPRTGTVVRNPEDLPAVIREIKGGRVEFRNDRTGNIHLQIGRKSFTDQQLLENLYVAVDAIARARPQAVKGQFFQSMTIAPTMGPGIPLDVATTVEEARQFVT.

Belongs to the universal ribosomal protein uL1 family. In terms of assembly, part of the 50S ribosomal subunit.

In terms of biological role, binds directly to 23S rRNA. The L1 stalk is quite mobile in the ribosome, and is involved in E site tRNA release. Functionally, protein L1 is also a translational repressor protein, it controls the translation of the L11 operon by binding to its mRNA. The sequence is that of Large ribosomal subunit protein uL1 from Thermomicrobium roseum (strain ATCC 27502 / DSM 5159 / P-2).